A 511-amino-acid polypeptide reads, in one-letter code: Glutamyl-tRNA(Gln) amidotransferase subunit B, mitochondrial (511 aa).

Residues 1-6 (MLRRYL) constitute a mitochondrion transit peptide.

It belongs to the GatB/GatE family. GatB subfamily. In terms of assembly, subunit of the heterotrimeric GatFAB amidotransferase (AdT) complex, composed of A, B and F subunits.

Its subcellular location is the mitochondrion. The catalysed reaction is L-glutamyl-tRNA(Gln) + L-glutamine + ATP + H2O = L-glutaminyl-tRNA(Gln) + L-glutamate + ADP + phosphate + H(+). Allows the formation of correctly charged Gln-tRNA(Gln) through the transamidation of misacylated Glu-tRNA(Gln) in the mitochondria. The reaction takes place in the presence of glutamine and ATP through an activated gamma-phospho-Glu-tRNA(Gln). The sequence is that of Glutamyl-tRNA(Gln) amidotransferase subunit B, mitochondrial from Lodderomyces elongisporus (strain ATCC 11503 / CBS 2605 / JCM 1781 / NBRC 1676 / NRRL YB-4239) (Yeast).